Reading from the N-terminus, the 467-residue chain is Iroquois-class homeodomain protein irx-1 (467 aa).

The homeobox; TALE-type DNA-binding region spans D126–N188. 3 disordered regions span residues E198–K307, S319–H342, and S410–A467. Acidic residues-rich tracts occupy residues E215 to I225 and N233 to E244. The segment covering K245–E262 has biased composition (basic and acidic residues). Residues K415–P431 are compositionally biased toward basic and acidic residues. A compositionally biased stretch (polar residues) spans R447–I460.

Belongs to the TALE/IRO homeobox family. In terms of tissue distribution, expressed in the neural plate in overlapping patterns with other irx members, which all share an anterior border of expression. Also expressed in the mesoderm, placodes and notochord. Broadly expressed in the tailbud rhombencephalon (hindbrain). Outside the nervous system and at tailbud stages, expressed in the developing otic vesicle, branchial arches, prospective heart region and pronephros.

It is found in the nucleus. Acts partially redundantly with other irx members in neural patterning. Required for formation of the posterior forebrain, midbrain, hindbrain, and to a lesser extent, spinal cord. Acts early in neural plate development to induce expression of some but not all proneural genes, and specify a neural precursor state. Also up-regulates repressors that prevent neuronal differentiation. Patterns the neuroectoderm in both the anterior/posterior and dorsal/ventral axes. Acts primarily as a transcriptional repressor during neural development, and binds to the bmp4 promoter to repress gene expression and thus mediate down-regulation of bmp4 by wnt signaling. Controls multiple processes through bmp4-repression including neural plate development, neural crest specification and Spemann organizer development. Involved in the specification of the preplacodal field at the anterior border of the neural plate. Regulates the genetic cascade of interactions that are necessary for positioning the isthmus organizer and the formation of the midbrain-hindbrain boundary. Required during at least two stages of pronephros kidney development; during neurula stages, maintains transcription of key renal genes to define the size and identity of the pronephric anlage, probably in part through regulation of bmp-signaling. Subsequently required for proper formation of the intermediate tubule segment of the pronephros. Acts principally as a transcriptional activator during pronephros development. The polypeptide is Iroquois-class homeodomain protein irx-1 (Xenopus tropicalis (Western clawed frog)).